Reading from the N-terminus, the 358-residue chain is S-adenosylmethionine:tRNA ribosyltransferase-isomerase (358 aa).

It belongs to the QueA family. Monomer.

The protein localises to the cytoplasm. It carries out the reaction 7-aminomethyl-7-carbaguanosine(34) in tRNA + S-adenosyl-L-methionine = epoxyqueuosine(34) in tRNA + adenine + L-methionine + 2 H(+). It participates in tRNA modification; tRNA-queuosine biosynthesis. In terms of biological role, transfers and isomerizes the ribose moiety from AdoMet to the 7-aminomethyl group of 7-deazaguanine (preQ1-tRNA) to give epoxyqueuosine (oQ-tRNA). This chain is S-adenosylmethionine:tRNA ribosyltransferase-isomerase, found in Rhodopseudomonas palustris (strain BisA53).